The chain runs to 516 residues: rRNA N(6)-adenosine-methyltransferase ZCCHC4 (516 aa).

Residues Cys40, His42, Cys66, Cys75, Cys127, Cys130, His142, and His145 each coordinate Zn(2+). The segment at 40-84 (CPHELGPTLLFVKVNQGKEETRRFYACSACRDRKDCNFFQWEDEK) adopts a GRF-type zinc-finger fold. Residues 174–177 (QYLF), Arg204, Asp227, 245–246 (NM), and Asp278 each bind S-adenosyl-L-methionine. A regulatory loop region spans residues 339–360 (QVVDYDNHALYKHGKTGRKQSP). Zn(2+) contacts are provided by Cys383, Cys386, His396, Cys397, Cys400, Cys403, His413, Cys414, Cys417, Cys420, His427, Cys428, Cys431, Cys434, His439, and Cys441. The 51-residue stretch at 398–448 (EHCNSCTSKDGRKWNHCFLCKKCVKPSWIHCSICNHCALPDHSCKGPKDGC) folds into the DHHC domain. A CCHC-type zinc finger spans residues 446-463 (DGCFICGELDHKRSACPN). A compositionally biased stretch (basic residues) spans 472–484 (KAVRKQKQRKSNK). Residues 472 to 516 (KAVRKQKQRKSNKMKMETTKGQSMNHTSATRKKKRRERTHQYLCS) are disordered. Residues 490-499 (TKGQSMNHTS) show a composition bias toward polar residues. A compositionally biased stretch (basic residues) spans 500–509 (ATRKKKRRER).

This sequence belongs to the ZCCHC4 family. As to quaternary structure, interacts with components of the ASC-1 complex TRIP4, ASCC1, ASCC2 and ASCC3. Interact with AHCYL1 and AHCYL2. Interact with YTHDC2.

It localises to the cytoplasm. The protein localises to the nucleus. Its subcellular location is the nucleolus. It catalyses the reaction adenosine(4220) in 28S rRNA + S-adenosyl-L-methionine = N(6)-methyladenosine(4220) in 28S rRNA + S-adenosyl-L-homocysteine + H(+). Functionally, rRNA N6-methyltransferase that specifically methylates the adenine in position 4220 of 28S rRNA. N6-methylation of adenine(4220) in 28S rRNA is required for translation. The sequence is that of rRNA N(6)-adenosine-methyltransferase ZCCHC4 from Bos taurus (Bovine).